Consider the following 445-residue polypeptide: Protein PRRC1 (445 aa).

Disordered regions lie at residues 1–71 (MMEE…PSAP) and 105–167 (PPVS…TGLL). The segment covering 27-49 (MSSTPVPLAATSSFSSPNVSSME) has biased composition (polar residues). A compositionally biased stretch (pro residues) spans 59 to 71 (PQPPLPPVRPSAP). Residues Ser-209 and Ser-408 each carry the phosphoserine modification.

Belongs to the PRRC1 family. As to quaternary structure, interacts with PRKAR1A; resulting in PKA activation. In terms of tissue distribution, ubiquitously expressed with higher expression in kidney, liver and placenta. Detected in embryonic kidney cells (HEK293 cells) (at protein level). As to expression, specifically expressed in liver.

Its subcellular location is the golgi apparatus. It is found in the cytoplasm. Functionally, may act as a regulator of the protein kinase A (PKA) activity during embryonic development. The sequence is that of Protein PRRC1 (PRRC1) from Homo sapiens (Human).